The chain runs to 477 residues: Aspartyl/glutamyl-tRNA(Asn/Gln) amidotransferase subunit B (477 aa).

Belongs to the GatB/GatE family. GatB subfamily. In terms of assembly, heterotrimer of A, B and C subunits.

The enzyme catalyses L-glutamyl-tRNA(Gln) + L-glutamine + ATP + H2O = L-glutaminyl-tRNA(Gln) + L-glutamate + ADP + phosphate + H(+). It carries out the reaction L-aspartyl-tRNA(Asn) + L-glutamine + ATP + H2O = L-asparaginyl-tRNA(Asn) + L-glutamate + ADP + phosphate + 2 H(+). Functionally, allows the formation of correctly charged Asn-tRNA(Asn) or Gln-tRNA(Gln) through the transamidation of misacylated Asp-tRNA(Asn) or Glu-tRNA(Gln) in organisms which lack either or both of asparaginyl-tRNA or glutaminyl-tRNA synthetases. The reaction takes place in the presence of glutamine and ATP through an activated phospho-Asp-tRNA(Asn) or phospho-Glu-tRNA(Gln). The chain is Aspartyl/glutamyl-tRNA(Asn/Gln) amidotransferase subunit B from Ureaplasma parvum serovar 3 (strain ATCC 27815 / 27 / NCTC 11736).